The chain runs to 300 residues: Protoheme IX farnesyltransferase 1 (300 aa).

8 helical membrane-spanning segments follow: residues 28–48, 50–70, 106–126, 150–170, 176–196, 222–242, 243–263, and 280–300; these read VVAL…PGAV, VQPL…AAAY, AMAI…TAWL, IVVG…AITG, ALLL…ALAI, CIML…LVGM, CGPL…YKAW, and FSIY…YLWS.

Belongs to the UbiA prenyltransferase family. Protoheme IX farnesyltransferase subfamily.

The protein localises to the cell inner membrane. The enzyme catalyses heme b + (2E,6E)-farnesyl diphosphate + H2O = Fe(II)-heme o + diphosphate. It functions in the pathway porphyrin-containing compound metabolism; heme O biosynthesis; heme O from protoheme: step 1/1. Converts heme B (protoheme IX) to heme O by substitution of the vinyl group on carbon 2 of heme B porphyrin ring with a hydroxyethyl farnesyl side group. The protein is Protoheme IX farnesyltransferase 1 of Shewanella loihica (strain ATCC BAA-1088 / PV-4).